A 67-amino-acid chain; its full sequence is MRIHFLLFALLFLFLMPVPGNGGIINMLQKSYCKIRKGRCALLGCLPKEEQIGSCSVSGRKCCRKKK.

Residues M1–G22 form the signal peptide. Intrachain disulfides connect C33–C62, C40–C55, and C45–C63.

It belongs to the beta-defensin family.

It is found in the secreted. Functionally, exhibits antimicrobial activity against Gram-positive and Gram-negative bacteria. This chain is Beta-defensin 103A (DEFB103A), found in Equus caballus (Horse).